Reading from the N-terminus, the 749-residue chain is Phototropin (749 aa).

In terms of domain architecture, PAS 1 spans 7–80 (PASQLTKVLA…QKIRDAIKKG (74 aa)). FMN is bound by residues 56–61 (NCRFLQ), Arg-74, Asn-89, Asn-99, and Gln-120. Cys-57 bears the S-4a-FMN cysteine mark. In terms of domain architecture, PAC 1 spans 81-135 (EACSVRLLNYRKDGTPFWNLLTVTPIKTPDGRVSKFVGVQVDVTSKTEGKALADN). Residues 200–273 (VALDLATTVE…DQIRAAIKEG (74 aa)) form the PAS 2 domain. The region spanning 274–328 (SELTVRILNYTKAGKAFWNMFTLAPMRDQDGHARFFVGVQVDVTAQSTSPDKAPV) is the PAC 2 domain. One can recognise a Protein kinase domain in the interval 404 to 712 (FRRVKQLGAG…ANEIKSHPWF (309 aa)). Residues 410–418 (LGAGDVGLV) and Lys-433 each bind ATP. The Proton acceptor role is filled by Asp-529. Disordered regions lie at residues 563 to 591 (KIGGAGAAGGSAPKSPKKSSSKSGGSSSG) and 729 to 749 (PRRASKAAGGSSTGGAAFDNY). Positions 713–749 (KGINWALLRHQQPPYVPRRASKAAGGSSTGGAAFDNY) constitute an AGC-kinase C-terminal domain. Residues 734–749 (KAAGGSSTGGAAFDNY) are compositionally biased toward low complexity.

The protein belongs to the protein kinase superfamily. AGC Ser/Thr protein kinase family. It depends on FMN as a cofactor. In terms of processing, autophosphorylated in response to blue light irradiation. Post-translationally, 2 molecules of FMN bind covalently to cysteines after exposure to blue light and are reversed in the dark. As to expression, expressed in gametes, pre-gametes and gametes generated by pre-gametes (at protein level).

It localises to the membrane. It carries out the reaction L-seryl-[protein] + ATP = O-phospho-L-seryl-[protein] + ADP + H(+). The catalysed reaction is L-threonyl-[protein] + ATP = O-phospho-L-threonyl-[protein] + ADP + H(+). Its function is as follows. Protein kinase that acts as a blue light photoreceptor. Required for non-photochemical quenching (NPQ), a mechanism that converts and dissipates the harmful excess absorbed light energy into heat and protect the photosynthetic apparatus from photo-oxidative damage. Controls the energy-dependent chlorophyll fluorescence quenching (qE) activity of chlorophyll excited states by inducing the expression of the qE effector protein LHCSR3 in high light intensities. The polypeptide is Phototropin (Chlamydomonas reinhardtii (Chlamydomonas smithii)).